We begin with the raw amino-acid sequence, 237 residues long: Ribosomal RNA small subunit methyltransferase G (237 aa).

S-adenosyl-L-methionine contacts are provided by residues Gly-78, Phe-83, 129-130 (AE), and Arg-148. The disordered stretch occupies residues 218–237 (KKETPRKYPRKAGTPNKKPL).

This sequence belongs to the methyltransferase superfamily. RNA methyltransferase RsmG family.

Its subcellular location is the cytoplasm. Functionally, specifically methylates the N7 position of a guanine in 16S rRNA. This is Ribosomal RNA small subunit methyltransferase G from Streptococcus uberis (strain ATCC BAA-854 / 0140J).